Here is a 388-residue protein sequence, read N- to C-terminus: Ectopic P granules protein 6 (388 aa).

Basic and acidic residues predominate over residues 1–25 (MSKKEETIFFRIEKENRPESSKKEE). The disordered stretch occupies residues 1 to 33 (MSKKEETIFFRIEKENRPESSKKEEDENSTEEM). A WD 1 repeat occupies 217–257 (AHLTDIAQVALNCQGTLVATGSTKGTVIRVFDARTKGPLYE). The LRRG motif motif lies at 258-261 (LRRG). The WD 2 repeat unit spans residues 262–301 (TVQAHLQCMAFSPCSSYLAVASDKGTLHMFGIRDAEPQKK). The interval 265–328 (AHLQCMAFSP…LDRPVMAIGF (64 aa)) is required for atg-2 binding.

Belongs to the WD repeat PROPPIN family. In terms of assembly, interacts with atg-2; the interaction is direct. In terms of tissue distribution, widely expressed in tissues including pharyngeal, muscle and neuronal tissues.

The protein resides in the cytoplasm. The protein localises to the preautophagosomal structure membrane. Its function is as follows. Component of the epg-6/atg-2 complex, which is involved in the generation of autophagosomes from omegasomes and in the distribution of atg-9 and atg-13 during the autophagy-mediated degradation of protein aggregates. Binds to phosphatidylinositols on preautophagosomes, which are early autophagic structures, to promote autophagosome formation. In particular, binds with high affinity to phosphatidylinositols including phosphatidylinositol 3-phosphate (PtdIns(3)P) and phosphatidylinositol 5-phosphate (PtdIns(5)P), but more weakly to phosphatidylinositol 4-phosphate (PtdIns(4)P) and phosphatidylinositol 3,5-bisphosphate (PtdIns(3,5)P2). Involved in autophagy-mediated degradation of ribosomal RNA and ribosomal proteins in lysosomes, which is essential for maintaining nucleotide homeostasis. The sequence is that of Ectopic P granules protein 6 from Caenorhabditis elegans.